The following is a 426-amino-acid chain: Histidine--tRNA ligase (426 aa).

The protein belongs to the class-II aminoacyl-tRNA synthetase family. In terms of assembly, homodimer.

It is found in the cytoplasm. The enzyme catalyses tRNA(His) + L-histidine + ATP = L-histidyl-tRNA(His) + AMP + diphosphate + H(+). The chain is Histidine--tRNA ligase from Colwellia psychrerythraea (strain 34H / ATCC BAA-681) (Vibrio psychroerythus).